A 331-amino-acid chain; its full sequence is L-lactate dehydrogenase A chain (331 aa).

Residues 29–57 and R98 each bind NAD(+); that span reads GMVGMASAISILLKDLCDELAMVDVMEDK. Residues R105, N137, and R168 each contribute to the substrate site. N137 contributes to the NAD(+) binding site. Catalysis depends on H192, which acts as the Proton acceptor. Residue T247 coordinates substrate.

This sequence belongs to the LDH/MDH superfamily. LDH family. Homotetramer.

The protein resides in the cytoplasm. The catalysed reaction is (S)-lactate + NAD(+) = pyruvate + NADH + H(+). The protein operates within fermentation; pyruvate fermentation to lactate; (S)-lactate from pyruvate: step 1/1. Functionally, interconverts simultaneously and stereospecifically pyruvate and lactate with concomitant interconversion of NADH and NAD(+). The chain is L-lactate dehydrogenase A chain (ldha) from Gobionotothen gibberifrons (Humped rockcod).